We begin with the raw amino-acid sequence, 585 residues long: Formate--tetrahydrofolate ligase (585 aa).

74–81 contributes to the ATP binding site; sequence TPLGEGKT.

This sequence belongs to the formate--tetrahydrofolate ligase family.

It catalyses the reaction (6S)-5,6,7,8-tetrahydrofolate + formate + ATP = (6R)-10-formyltetrahydrofolate + ADP + phosphate. It participates in one-carbon metabolism; tetrahydrofolate interconversion. This Yersinia enterocolitica serotype O:8 / biotype 1B (strain NCTC 13174 / 8081) protein is Formate--tetrahydrofolate ligase.